The chain runs to 105 residues: D-galactoside-specific lectin (105 aa).

Positions 13–103 (VCEDSSLTIS…KYLAVTYICS (91 aa)) constitute an SUEL-type lectin domain.

In terms of assembly, homodimer; disulfide-linked.

Its subcellular location is the cytoplasm. Functionally, this protein binds D-galactoside. May have an important role in the activation of eggs (triggered by fertilization), or in their subsequent differentiation. The dimeric form is essential for hemagglutination activity. This Heliocidaris crassispina (Sea urchin) protein is D-galactoside-specific lectin.